A 721-amino-acid chain; its full sequence is 1,4-alpha-glucan branching enzyme GlgB (721 aa).

Residue Asp404 is the Nucleophile of the active site. The active-site Proton donor is Glu457.

It belongs to the glycosyl hydrolase 13 family. GlgB subfamily. In terms of assembly, monomer.

It catalyses the reaction Transfers a segment of a (1-&gt;4)-alpha-D-glucan chain to a primary hydroxy group in a similar glucan chain.. It functions in the pathway glycan biosynthesis; glycogen biosynthesis. Functionally, catalyzes the formation of the alpha-1,6-glucosidic linkages in glycogen by scission of a 1,4-alpha-linked oligosaccharide from growing alpha-1,4-glucan chains and the subsequent attachment of the oligosaccharide to the alpha-1,6 position. In Bradyrhizobium diazoefficiens (strain JCM 10833 / BCRC 13528 / IAM 13628 / NBRC 14792 / USDA 110), this protein is 1,4-alpha-glucan branching enzyme GlgB.